A 355-amino-acid polypeptide reads, in one-letter code: Ubiquinone biosynthesis protein COQ4 homolog, mitochondrial (355 aa).

Residues His-134, Asp-135, His-138, and Glu-150 each coordinate Zn(2+).

Belongs to the COQ4 family. Component of a multi-subunit COQ enzyme complex. It depends on Zn(2+) as a cofactor.

It localises to the mitochondrion inner membrane. It carries out the reaction a 4-hydroxy-3-methoxy-5-(all-trans-polyprenyl)benzoate + H(+) = a 2-methoxy-6-(all-trans-polyprenyl)phenol + CO2. It functions in the pathway cofactor biosynthesis; ubiquinone biosynthesis. Functionally, lyase that catalyzes the C1-decarboxylation of 4-hydroxy-3-methoxy-5-(all-trans-polyprenyl)benzoic acid into 2-methoxy-6-(all-trans-polyprenyl)phenol during ubiquinone biosynthesis. This Plasmodium yoelii yoelii protein is Ubiquinone biosynthesis protein COQ4 homolog, mitochondrial.